A 92-amino-acid chain; its full sequence is Putative septation protein SpoVG (92 aa).

It belongs to the SpoVG family.

Its function is as follows. Could be involved in septation. The chain is Putative septation protein SpoVG from Thermoanaerobacter pseudethanolicus (strain ATCC 33223 / 39E) (Clostridium thermohydrosulfuricum).